The chain runs to 446 residues: Na(+)-translocating NADH-quinone reductase subunit A (446 aa).

The protein belongs to the NqrA family. Composed of six subunits; NqrA, NqrB, NqrC, NqrD, NqrE and NqrF.

The enzyme catalyses a ubiquinone + n Na(+)(in) + NADH + H(+) = a ubiquinol + n Na(+)(out) + NAD(+). Functionally, NQR complex catalyzes the reduction of ubiquinone-1 to ubiquinol by two successive reactions, coupled with the transport of Na(+) ions from the cytoplasm to the periplasm. NqrA to NqrE are probably involved in the second step, the conversion of ubisemiquinone to ubiquinol. This Vibrio cholerae serotype O1 (strain ATCC 39541 / Classical Ogawa 395 / O395) protein is Na(+)-translocating NADH-quinone reductase subunit A.